The sequence spans 89 residues: Small ribosomal subunit protein uS15 (89 aa).

Belongs to the universal ribosomal protein uS15 family. Part of the 30S ribosomal subunit. Forms a bridge to the 50S subunit in the 70S ribosome, contacting the 23S rRNA.

One of the primary rRNA binding proteins, it binds directly to 16S rRNA where it helps nucleate assembly of the platform of the 30S subunit by binding and bridging several RNA helices of the 16S rRNA. Functionally, forms an intersubunit bridge (bridge B4) with the 23S rRNA of the 50S subunit in the ribosome. This Bradyrhizobium sp. (strain BTAi1 / ATCC BAA-1182) protein is Small ribosomal subunit protein uS15.